Reading from the N-terminus, the 115-residue chain is Large ribosomal subunit protein uL24 (115 aa).

This sequence belongs to the universal ribosomal protein uL24 family. In terms of assembly, part of the 50S ribosomal subunit.

Its function is as follows. One of two assembly initiator proteins, it binds directly to the 5'-end of the 23S rRNA, where it nucleates assembly of the 50S subunit. One of the proteins that surrounds the polypeptide exit tunnel on the outside of the subunit. The chain is Large ribosomal subunit protein uL24 from Amoebophilus asiaticus (strain 5a2).